Here is a 208-residue protein sequence, read N- to C-terminus: dITP/XTP pyrophosphatase (208 aa).

A substrate-binding site is contributed by serine 11 to lysine 16. The active-site Proton acceptor is the aspartate 76. Aspartate 76 contacts Mg(2+). Substrate-binding positions include serine 77, phenylalanine 158–aspartate 161, lysine 184, and histidine 189–arginine 190.

This sequence belongs to the HAM1 NTPase family. Homodimer. The cofactor is Mg(2+).

The catalysed reaction is XTP + H2O = XMP + diphosphate + H(+). The enzyme catalyses dITP + H2O = dIMP + diphosphate + H(+). It catalyses the reaction ITP + H2O = IMP + diphosphate + H(+). Pyrophosphatase that catalyzes the hydrolysis of nucleoside triphosphates to their monophosphate derivatives, with a high preference for the non-canonical purine nucleotides XTP (xanthosine triphosphate), dITP (deoxyinosine triphosphate) and ITP. Seems to function as a house-cleaning enzyme that removes non-canonical purine nucleotides from the nucleotide pool, thus preventing their incorporation into DNA/RNA and avoiding chromosomal lesions. The chain is dITP/XTP pyrophosphatase from Mycobacterium leprae (strain TN).